Here is a 159-residue protein sequence, read N- to C-terminus: MRRAVCPGSFDPITNGHLDIIGRASKLYDVVHVAVMINQSKKGLFTVDERIELIREVTADFGNVEVESFHGLLVDFCKQREIPAIVKGLRAVSDFDYELQMAQMNNGLSGVETLFVPTNPTYSFLSSSLVKEVATWGGDVSHLLPPTVHEALVKRLGER.

Residue Ser9 participates in substrate binding. ATP is bound by residues 9 to 10 (SF) and His17. The substrate site is built by Lys41, Leu73, and Lys87. ATP-binding positions include 88–90 (GLR), Glu98, and 122–128 (YSFLSSS).

It belongs to the bacterial CoaD family. As to quaternary structure, homohexamer. Mg(2+) is required as a cofactor.

The protein resides in the cytoplasm. The enzyme catalyses (R)-4'-phosphopantetheine + ATP + H(+) = 3'-dephospho-CoA + diphosphate. Its pathway is cofactor biosynthesis; coenzyme A biosynthesis; CoA from (R)-pantothenate: step 4/5. Its function is as follows. Reversibly transfers an adenylyl group from ATP to 4'-phosphopantetheine, yielding dephospho-CoA (dPCoA) and pyrophosphate. The protein is Phosphopantetheine adenylyltransferase of Streptomyces griseus subsp. griseus (strain JCM 4626 / CBS 651.72 / NBRC 13350 / KCC S-0626 / ISP 5235).